The primary structure comprises 258 residues: Small ribosomal subunit protein uS2 (258 aa).

The disordered stretch occupies residues 226 to 258 (QGVSNEEVAAEQNIDLDEKEKSEETEATEATEE).

It belongs to the universal ribosomal protein uS2 family.

This chain is Small ribosomal subunit protein uS2, found in Staphylococcus aureus (strain COL).